Reading from the N-terminus, the 295-residue chain is Nucleotide-binding protein Lxx11490 (295 aa).

ATP is bound at residue 19–26 (GMSGAGRS). 70-73 (DVRG) contacts GTP.

The protein belongs to the RapZ-like family.

Functionally, displays ATPase and GTPase activities. The polypeptide is Nucleotide-binding protein Lxx11490 (Leifsonia xyli subsp. xyli (strain CTCB07)).